Reading from the N-terminus, the 382-residue chain is MTEKATAPGEGANDLSMAVLNAIQNPVILVDENGFVAFANWEAESFFGASANHLARHDISAFIPFGSPLLTLIEQVRERRAAVNEYRVDLSSPRLGADKLVDLYVAPVLSQPGSVVIVFQERSMADKIDRQLTHRAAARSVTGLASMLAHEIKNPLSGIRGAAQLLETSVNDEDRSLTRLICDETDRIVSLVDRMEVFSDERPVDRLPLNIHAVLDHVKAIAKAGFARRIKISEHYDPSLPPVFANRDQLVQVFLNLIKNAAEAIGDRADGEILLTTAYRPGIRLSVAGTREKISLPLEFCVHDNGPGVPPDLLPHLFDPFITTKTNGSGLGLALVAKIIGGHGGIVECDSQHSRTTFRVLMPASKGLAADEETPMTKGTNG.

The PAS domain maps to D14–A81. The Histidine kinase domain maps to M147–K366. H150 bears the Phosphohistidine; by autocatalysis mark.

In terms of processing, autophosphorylated.

Its subcellular location is the cytoplasm. It catalyses the reaction ATP + protein L-histidine = ADP + protein N-phospho-L-histidine.. Member of the two-component regulatory system NtrB/NtrC, which controls expression of the nitrogen-regulated (ntr) genes in response to nitrogen limitation. Under conditions of nitrogen limitation, NtrB autophosphorylates and transfers the phosphoryl group to NtrC. In the presence of nitrogen, acts as a phosphatase that dephosphorylates and inactivates NtrC. This chain is Sensory histidine kinase/phosphatase NtrB (ntrB), found in Rhizobium meliloti (strain 1021) (Ensifer meliloti).